The following is a 256-amino-acid chain: Small ribosomal subunit protein uS2 (256 aa).

This sequence belongs to the universal ribosomal protein uS2 family.

The polypeptide is Small ribosomal subunit protein uS2 (Streptococcus agalactiae serotype Ia (strain ATCC 27591 / A909 / CDC SS700)).